Reading from the N-terminus, the 446-residue chain is MDMPDYTETLDSSYTMLEFDSIRVLPSNTEIITVETASPGLLNNGINSFCAICGDRATGKHYGASSCDGCKGFFRRSVRKNHVYACRFSRQCIVDKDKRNQCRYCRLRKCFRAGMKKEAVQNERDRISMRRSSYEDNGSLSINVLTQAEAMVHQYSPVSPVHSSDISMKKVASISDVCESMKQQLLLLVEWAKYIPAFCELPLDDQVALLRAHAGAHLLLGVAKRSLPYKDFLLLGNDFIMPMHCPELEIARVPCRILDELVKPLREIQIDDNEYVCLKAIIFFDPDCKGLSDQTKVKNMRFQVQVNLEDYINDRQFDSRGRFSDILLLLPPLQSITWQMIEQVQFAKLFGVARIDSLLQELLLGGTTMDGGQYINSGHSSLNLDLLPGPTVHSHNLHSVIHTVSSLSPETSPPTNSTSEDYKMNTATVSSIPLMQRTVIAKKEIL.

Residues 47–122 constitute a DNA-binding region (nuclear receptor); sequence NSFCAICGDR…AGMKKEAVQN (76 aa). NR C4-type zinc fingers lie at residues 50-70 and 86-110; these read CAICGDRATGKHYGASSCDGC and CRFSRQCIVDKDKRNQCRYCRLRKC. The region spanning 137–366 is the NR LBD domain; that stretch reads NGSLSINVLT…SLLQELLLGG (230 aa).

The protein belongs to the nuclear hormone receptor family. NR2 subfamily. In terms of assembly, homodimerization is required for HNF4-alpha to bind to its recognition site. Expressed in liver, kidney, stomach, intestine, lung, ovary, and testis. Not expressed in fat, muscle and brain.

The protein resides in the nucleus. Transcription factor; binds and activates the promoter for the HNF1-alpha gene. Seems to have a lower DNA binding activity than HNF4-alpha and is a weaker transactivator than the alpha isoform. This Xenopus laevis (African clawed frog) protein is Hepatocyte nuclear factor 4-beta (hnf4b).